A 114-amino-acid chain; its full sequence is Lymphotactin (114 aa).

The N-terminal stretch at methionine 1–glycine 21 is a signal peptide. A disulfide bond links cysteine 32 and cysteine 69. The segment at arginine 87–glycine 114 is disordered. Polar residues predominate over residues isoleucine 98–glycine 114.

Belongs to the intercrine gamma family.

It is found in the secreted. Chemotactic activity for lymphocytes but not for monocytes or neutrophils. In thymus, mediates medullary accumulation of thymic dendritic cells and contributes to regulatoy T cell development, playing a role in self-tolerance establishment. The chain is Lymphotactin (Xcl1) from Rattus norvegicus (Rat).